A 433-amino-acid polypeptide reads, in one-letter code: Alpha-(1-&gt;3)-arabinofuranosyltransferase (433 aa).

Transmembrane regions (helical) follow at residues 118–138 (LFIS…LRMF), 140–160 (FTLT…TETV), 164–184 (LVFT…LRWL), 197–217 (LAIG…LLPL), 224–244 (ALVA…PLVS), 280–300 (WLIL…LWLL), 310–330 (LFWF…VMSL), 333–353 (GYYS…NSVI), 356–376 (WPAW…LFNW), and 385–405 (YLKI…VLYF).

It belongs to the glycosyltransferase 87 family.

The protein localises to the cell membrane. It carries out the reaction Adds an alpha-D-arabinofuranosyl group from trans,octacis-decaprenylphospho-beta-D-arabinofuranose at the 3-O-position of an alpha-(1-&gt;5)-arabinofuranan chain attached to a beta-(1-&gt;5)-galactofuranan chain.. The protein operates within cell wall biogenesis; cell wall polysaccharide biosynthesis. Functionally, involved in the biosynthesis of the arabinogalactan (AG) region of the mycolylarabinogalactan-peptidoglycan (mAGP) complex, an essential component of the mycobacterial cell wall. Catalyzes the addition of an arabinofuranosyl (Araf) residue from the sugar donor beta-D-arabinofuranosyl-1-monophosphoryldecaprenol (DPA) on the C-3 of an alpha-(1-&gt;5)-linked Araf from the arabinan backbone of AG. This chain is Alpha-(1-&gt;3)-arabinofuranosyltransferase (aftC), found in Mycobacterium tuberculosis (strain CDC 1551 / Oshkosh).